Here is a 343-residue protein sequence, read N- to C-terminus: Aspartate carbamoyltransferase catalytic subunit (343 aa).

Carbamoyl phosphate is bound by residues Arg-54 and Thr-55. Lys-82 lines the L-aspartate pocket. Carbamoyl phosphate-binding residues include Arg-104, His-134, and Gln-137. L-aspartate-binding residues include Arg-177 and Arg-232. 2 residues coordinate carbamoyl phosphate: Gly-277 and Pro-278. The disordered stretch occupies residues Pro-323–Arg-343.

Belongs to the aspartate/ornithine carbamoyltransferase superfamily. ATCase family. In terms of assembly, heterododecamer (2C3:3R2) of six catalytic PyrB chains organized as two trimers (C3), and six regulatory PyrI chains organized as three dimers (R2).

The catalysed reaction is carbamoyl phosphate + L-aspartate = N-carbamoyl-L-aspartate + phosphate + H(+). Its pathway is pyrimidine metabolism; UMP biosynthesis via de novo pathway; (S)-dihydroorotate from bicarbonate: step 2/3. Functionally, catalyzes the condensation of carbamoyl phosphate and aspartate to form carbamoyl aspartate and inorganic phosphate, the committed step in the de novo pyrimidine nucleotide biosynthesis pathway. In Renibacterium salmoninarum (strain ATCC 33209 / DSM 20767 / JCM 11484 / NBRC 15589 / NCIMB 2235), this protein is Aspartate carbamoyltransferase catalytic subunit.